A 27-amino-acid polypeptide reads, in one-letter code: Conotoxin flf14b (27 aa).

Disulfide bonds link cysteine 6/cysteine 26 and cysteine 10/cysteine 22.

In terms of tissue distribution, expressed by the venom duct.

It is found in the secreted. The protein is Conotoxin flf14b of Conus anabathrum floridanus (Florida cone).